We begin with the raw amino-acid sequence, 99 residues long: MALTKAEMSEYLFDKLGLSKRDAKELVELFFEEIRRALENGEQVKLSGFGNFDLRDKNQRPGRNPKTGEDIPITARRVVTFRPGQKLKSRVENASPKDE.

The segment at 49–73 is disordered; it reads FGNFDLRDKNQRPGRNPKTGEDIPI.

The protein belongs to the bacterial histone-like protein family. Heterodimer of an alpha and a beta chain.

Its function is as follows. This protein is one of the two subunits of integration host factor, a specific DNA-binding protein that functions in genetic recombination as well as in transcriptional and translational control. This Shigella boydii serotype 18 (strain CDC 3083-94 / BS512) protein is Integration host factor subunit alpha.